A 312-amino-acid polypeptide reads, in one-letter code: Short chain dehydrogenase pgmD (312 aa).

Val46, Ile47, Lys171, Tyr207, Lys211, and Thr242 together coordinate NADP(+). The active-site Proton donor is the Tyr207. The active-site Lowers pKa of active site Tyr is Lys211.

It belongs to the short-chain dehydrogenases/reductases (SDR) family.

It functions in the pathway pigment biosynthesis. The protein operates within secondary metabolite biosynthesis. Functionally, short chain dehydrogenase; part of the gene cluster that mediates the biosynthesis of pleosporalin A, ascomycone A, as well as a third cryptic naphthoquinone derived pigment, all responsible for the coloration of conidia. Essential for the production of pleosporalin A, but not the 2 other final products. The pathway begins with the biosynthesis of the cyclized heptaketide 3-acetonyl-1,6,8-trihydroxy-2-naphthaldehyde by the NR-PKS pgmA. The C-6 hydroxyl group is further methylated by the O-methyltransferase pgmB to yield fusarubinaldehyde which is in turn oxidized by the cytochrome P450 monooxygenase pgmC at C-9. The C-1 hydroxyl group is then methylated spontaneously. Although pgmE, pgmD and pgmH are essential for the production of pleosporalin A, it is not the case for the 2 other final products and it remains difficult to assign a specific function to each enzyme. PgmF and pgmG seem not to be involved in pigment biosynthesis although they were regulated by the cluster-specific transcription factor pgmR. This is Short chain dehydrogenase pgmD from Aspergillus terreus.